Consider the following 601-residue polypeptide: Glutamine--fructose-6-phosphate aminotransferase [isomerizing] (601 aa).

Cys2 (nucleophile; for GATase activity) is an active-site residue. The Glutamine amidotransferase type-2 domain occupies 2–218 (CGIVGYIGYD…DHEIVIVKRD (217 aa)). SIS domains lie at 284 to 423 (IIND…NHGR) and 453 to 591 (IATD…VDKP). The active-site For Fru-6P isomerization activity is the Lys596.

As to quaternary structure, homodimer.

It localises to the cytoplasm. It catalyses the reaction D-fructose 6-phosphate + L-glutamine = D-glucosamine 6-phosphate + L-glutamate. Functionally, catalyzes the first step in hexosamine metabolism, converting fructose-6P into glucosamine-6P using glutamine as a nitrogen source. This chain is Glutamine--fructose-6-phosphate aminotransferase [isomerizing], found in Staphylococcus epidermidis (strain ATCC 35984 / DSM 28319 / BCRC 17069 / CCUG 31568 / BM 3577 / RP62A).